The chain runs to 144 residues: 3-hydroxyacyl-[acyl-carrier-protein] dehydratase FabZ (144 aa).

The active site involves histidine 51.

This sequence belongs to the thioester dehydratase family. FabZ subfamily.

It localises to the cytoplasm. It carries out the reaction a (3R)-hydroxyacyl-[ACP] = a (2E)-enoyl-[ACP] + H2O. Its function is as follows. Involved in unsaturated fatty acids biosynthesis. Catalyzes the dehydration of short chain beta-hydroxyacyl-ACPs and long chain saturated and unsaturated beta-hydroxyacyl-ACPs. This chain is 3-hydroxyacyl-[acyl-carrier-protein] dehydratase FabZ (fabZ2), found in Lactococcus lactis subsp. lactis (strain IL1403) (Streptococcus lactis).